We begin with the raw amino-acid sequence, 545 residues long: T-complex protein 1 subunit gamma (545 aa).

Methionine 1 is modified (N-acetylmethionine). The segment at 1-24 (MMGHRPVLVLSQNTKRESGRKVQS) is disordered. A Phosphoserine modification is found at serine 11. Residue lysine 15 forms a Glycyl lysine isopeptide (Lys-Gly) (interchain with G-Cter in SUMO2) linkage. Glycine 42 is an ADP binding site. Glycine 42 serves as a coordination point for ATP. Aspartate 93 provides a ligand contact to Mg(2+). 6 residues coordinate ADP: glycine 94, threonine 95, threonine 96, serine 97, threonine 162, and lysine 163. ATP-binding residues include glycine 94, threonine 95, and threonine 96. A Phosphoserine modification is found at serine 170. Lysine 222 is modified (N6-acetyllysine). Phosphoserine is present on residues serine 243 and serine 244. The residue at position 247 (tyrosine 247) is a Phosphotyrosine. Glycyl lysine isopeptide (Lys-Gly) (interchain with G-Cter in SUMO2) cross-links involve residues lysine 248 and lysine 249. Serine 252 carries the post-translational modification Phosphoserine. A disulfide bridge connects residues cysteine 366 and cysteine 372. Residue lysine 381 forms a Glycyl lysine isopeptide (Lys-Gly) (interchain with G-Cter in SUMO2) linkage. Position 411 (glycine 411) interacts with ADP. An ATP-binding site is contributed by glycine 411. Threonine 430 and threonine 459 each carry phosphothreonine. ADP-binding residues include glycine 482, glutamate 483, glutamate 497, and lysine 502. Residue glycine 482 coordinates ATP. Glutamate 497 serves as a coordination point for ATP. The tract at residues 526–545 (HKKKGDDQNRQTGAPDAGQE) is disordered.

Belongs to the TCP-1 chaperonin family. In terms of assembly, component of the chaperonin-containing T-complex (TRiC), a hexadecamer composed of two identical back-to-back stacked rings enclosing a protein folding chamber. Each ring is made up of eight different subunits: TCP1/CCT1, CCT2, CCT3, CCT4, CCT5, CCT6A/CCT6, CCT7, CCT8. Interacts with PACRG. Interacts with DNAAF4. Interacts with DLEC1. Post-translationally, the N-terminus is blocked.

The protein localises to the cytoplasm. It catalyses the reaction ATP + H2O = ADP + phosphate + H(+). In terms of biological role, component of the chaperonin-containing T-complex (TRiC), a molecular chaperone complex that assists the folding of actin, tubulin and other proteins upon ATP hydrolysis. The TRiC complex mediates the folding of WRAP53/TCAB1, thereby regulating telomere maintenance. As part of the TRiC complex may play a role in the assembly of BBSome, a complex involved in ciliogenesis regulating transports vesicles to the cilia. This chain is T-complex protein 1 subunit gamma (Cct3), found in Mus musculus (Mouse).